Consider the following 424-residue polypeptide: UDP-N-acetylglucosamine 1-carboxyvinyltransferase (424 aa).

Phosphoenolpyruvate is bound at residue 22 to 23; sequence KN. R93 contacts UDP-N-acetyl-alpha-D-glucosamine. C117 serves as the catalytic Proton donor. A 2-(S-cysteinyl)pyruvic acid O-phosphothioketal modification is found at C117. UDP-N-acetyl-alpha-D-glucosamine is bound by residues 162–165, D307, and I329; that span reads KVSV.

Belongs to the EPSP synthase family. MurA subfamily.

Its subcellular location is the cytoplasm. It carries out the reaction phosphoenolpyruvate + UDP-N-acetyl-alpha-D-glucosamine = UDP-N-acetyl-3-O-(1-carboxyvinyl)-alpha-D-glucosamine + phosphate. It functions in the pathway cell wall biogenesis; peptidoglycan biosynthesis. Cell wall formation. Adds enolpyruvyl to UDP-N-acetylglucosamine. The sequence is that of UDP-N-acetylglucosamine 1-carboxyvinyltransferase from Glaesserella parasuis serovar 5 (strain SH0165) (Haemophilus parasuis).